The primary structure comprises 127 residues: MPVTAMCLQDSKKLKKAKLTRKKVTPFPFSRMVLCLSLVFTLYVEATNARCLRPRSKELLCGSELVDILQFICGPTGFYVSKGASFRNRNRPGIVEECCFCGCSVAILESYCAAPVTNFTGREEQKS.

Positions Met-1–Ala-49 are cleaved as a signal peptide. Residues Ala-49–Val-80 form a b region. Intrachain disulfides connect Cys-61–Cys-99, Cys-73–Cys-112, and Cys-98–Cys-103. The c stretch occupies residues Ser-81–Pro-92. Residues Gly-93 to Ala-113 are a. The segment at Ala-114–Gly-121 is d. A propeptide spans Arg-122–Ser-127 (e peptide).

It belongs to the insulin family.

Its subcellular location is the secreted. In terms of biological role, the insulin-like growth factors, isolated from plasma, are structurally and functionally related to insulin but have a much higher growth-promoting activity. Promotes anterior neural development. This chain is Insulin-like growth factor 3.L, found in Xenopus laevis (African clawed frog).